Here is a 331-residue protein sequence, read N- to C-terminus: Homoserine kinase (331 aa).

This sequence belongs to the pseudomonas-type ThrB family.

The enzyme catalyses L-homoserine + ATP = O-phospho-L-homoserine + ADP + H(+). The protein operates within amino-acid biosynthesis; L-threonine biosynthesis; L-threonine from L-aspartate: step 4/5. The sequence is that of Homoserine kinase from Burkholderia pseudomallei (strain 1710b).